We begin with the raw amino-acid sequence, 473 residues long: Glycogen synthase (473 aa).

ADP-alpha-D-glucose is bound at residue Lys15.

The protein belongs to the glycosyltransferase 1 family. Bacterial/plant glycogen synthase subfamily.

It carries out the reaction [(1-&gt;4)-alpha-D-glucosyl](n) + ADP-alpha-D-glucose = [(1-&gt;4)-alpha-D-glucosyl](n+1) + ADP + H(+). It participates in glycan biosynthesis; glycogen biosynthesis. In terms of biological role, synthesizes alpha-1,4-glucan chains using ADP-glucose. This chain is Glycogen synthase, found in Flavobacterium johnsoniae (strain ATCC 17061 / DSM 2064 / JCM 8514 / BCRC 14874 / CCUG 350202 / NBRC 14942 / NCIMB 11054 / UW101) (Cytophaga johnsonae).